The primary structure comprises 356 residues: D-alanine--D-alanine ligase (356 aa).

The ATP-grasp domain maps to 134–339 (KQLFATRGLP…YSELITDLIN (206 aa)). 167–222 (EGKLTYPVFVKPANLGSSVGISKCTDSETLIHGIEEALQFDRKLVIEQGVNAREVE) serves as a coordination point for ATP. Residues Asp293, Glu306, and Asn308 each contribute to the Mg(2+) site.

Belongs to the D-alanine--D-alanine ligase family. Mg(2+) serves as cofactor. The cofactor is Mn(2+).

It is found in the cytoplasm. It carries out the reaction 2 D-alanine + ATP = D-alanyl-D-alanine + ADP + phosphate + H(+). Its pathway is cell wall biogenesis; peptidoglycan biosynthesis. Cell wall formation. The chain is D-alanine--D-alanine ligase from Macrococcus caseolyticus (strain JCSC5402) (Macrococcoides caseolyticum).